The following is a 649-amino-acid chain: FAS-associated factor 1 (649 aa).

The UBA domain maps to 1–57 (MASNMDREMILADFQACTGIENIDEAITLLEQNNWDLVAAINGVIPQENGILQSDFG). 2 disordered regions span residues 56-84 (FGGETMPGPTFDPASHPAPASTPSSSAFR) and 266-290 (RRTSPVQTREQSEEQSTDVHMVSDS). Residues 68 to 82 (PASHPAPASTPSSSA) show a composition bias toward low complexity. Serine 319 is modified (phosphoserine). The 78-residue stretch at 568–645 (NAEPVSKLRI…NLFPQETLFL (78 aa)) folds into the UBX domain. At threonine 579 the chain carries Phosphothreonine. Serine 581 carries the phosphoserine modification.

Interacts with CDT1 and ATPase VCP/p97. Interacts (via UBA domain) with FAS (via death domain). Interacts (via UBA domain) with NLRP12 (via DAPIN/PYRIN domain).

It is found in the nucleus. Its function is as follows. Ubiquitin-binding protein. Required for the progression of DNA replication forks by targeting DNA replication licensing factor CDT1 for degradation. Potentiates but cannot initiate FAS-induced apoptosis. This chain is FAS-associated factor 1 (Faf1), found in Mus musculus (Mouse).